The sequence spans 383 residues: Succinyl-diaminopimelate desuccinylase (383 aa).

Position 72 (H72) interacts with Zn(2+). The active site involves D74. D105 lines the Zn(2+) pocket. Residue E137 is the Proton acceptor of the active site. 3 residues coordinate Zn(2+): E138, E167, and H352.

This sequence belongs to the peptidase M20A family. DapE subfamily. Homodimer. The cofactor is Zn(2+). Co(2+) serves as cofactor.

The catalysed reaction is N-succinyl-(2S,6S)-2,6-diaminopimelate + H2O = (2S,6S)-2,6-diaminopimelate + succinate. It participates in amino-acid biosynthesis; L-lysine biosynthesis via DAP pathway; LL-2,6-diaminopimelate from (S)-tetrahydrodipicolinate (succinylase route): step 3/3. Catalyzes the hydrolysis of N-succinyl-L,L-diaminopimelic acid (SDAP), forming succinate and LL-2,6-diaminopimelate (DAP), an intermediate involved in the bacterial biosynthesis of lysine and meso-diaminopimelic acid, an essential component of bacterial cell walls. The polypeptide is Succinyl-diaminopimelate desuccinylase (Ehrlichia ruminantium (strain Welgevonden)).